The sequence spans 446 residues: Minor teichoic acid biosynthesis protein GgaA (446 aa).

This sequence belongs to the glycosyltransferase 2 family.

It functions in the pathway cell wall biogenesis; poly(glucopyranosyl N-acetylgalactosamine 1-phosphate) teichoic acid biosynthesis. In terms of biological role, involved in the biosynthesis of galactosamine-containing minor teichoic acid, a non-essential cell wall polymer in B.subtilis 168. The protein is Minor teichoic acid biosynthesis protein GgaA (ggaA) of Bacillus subtilis (strain 168).